A 454-amino-acid chain; its full sequence is Glutamine synthetase (454 aa).

The region spanning 25-111 is the GS beta-grasp domain; that stretch reads QGIDFLRLQF…LICDVVDREG (87 aa). Positions 118 to 454 constitute a GS catalytic domain; that stretch reads PRQVLKNVLA…WETDRYLEKF (337 aa). Mg(2+)-binding residues include Glu141 and Glu143. An ATP-binding site is contributed by Glu193. Residues Glu198 and Glu205 each contribute to the Mg(2+) site. L-glutamate-binding positions include 249 to 250 and Gly250; that span reads NG. His254 is a binding site for Mg(2+). Residues 256–258 and Ser258 each bind ATP; that span reads HIS. L-glutamate is bound by residues Arg308, Glu314, and Arg326. 2 residues coordinate ATP: Arg326 and Arg331. Mg(2+) is bound at residue Glu343. Position 345 (Arg345) interacts with L-glutamate.

Belongs to the glutamine synthetase family. As to quaternary structure, oligomer of 12 subunits arranged in the form of two hexagons. In its feedback-inhibited form, interacts with TnrA in order to block its DNA-binding activity. Mg(2+) is required as a cofactor.

Its subcellular location is the cytoplasm. It catalyses the reaction L-glutamate + NH4(+) + ATP = L-glutamine + ADP + phosphate + H(+). Its activity is regulated as follows. Inhibited by glutamine. Glutamine synthetase (GS) is an unusual multitasking protein that functions as an enzyme, a transcription coregulator, and a chaperone in ammonium assimilation and in the regulation of genes involved in nitrogen metabolism. It catalyzes the ATP-dependent biosynthesis of glutamine from glutamate and ammonia. Feedback-inhibited GlnA also interacts with and regulates the activity of the transcriptional regulator TnrA. During nitrogen limitation, TnrA is in its DNA-binding active state and turns on the transcription of genes required for nitrogen assimilation. Under conditions of nitrogen excess, feedback-inhibited GlnA forms a stable complex with TnrA, which inhibits its DNA-binding activity. In contrast, feedback-inhibited GlnA acts as a chaperone to stabilize the DNA-binding activity of GlnR, which represses the transcription of nitrogen assimilation genes. The protein is Glutamine synthetase of Halobacterium salinarum (strain ATCC 700922 / JCM 11081 / NRC-1) (Halobacterium halobium).